Reading from the N-terminus, the 309-residue chain is Prephenate dehydratase (309 aa).

Residues 3 to 191 (GIAYLGPEGT…ARTRFVLVGC (189 aa)) form the Prephenate dehydratase domain. The region spanning 205 to 282 (SVVLRLDNVP…ADVRYLGSWP (78 aa)) is the ACT domain.

In terms of assembly, homodimer.

It catalyses the reaction prephenate + H(+) = 3-phenylpyruvate + CO2 + H2O. It participates in amino-acid biosynthesis; L-phenylalanine biosynthesis; phenylpyruvate from prephenate: step 1/1. The protein is Prephenate dehydratase (pheA) of Mycolicibacterium gilvum (strain PYR-GCK) (Mycobacterium gilvum (strain PYR-GCK)).